A 517-amino-acid polypeptide reads, in one-letter code: Retinal dehydrogenase 2 (517 aa).

Residues 184–186 (IPW), 210–213 (KPAE), and 264–266 (STE) each bind NAD(+). Glu286 (proton acceptor) is an active-site residue. Cys320 serves as the catalytic Nucleophile. NAD(+)-binding positions include 366–370 (KQYNK) and Glu417.

This sequence belongs to the aldehyde dehydrogenase family. Homotetramer. As to expression, expressed in the high vocal center (HVC) which integrates auditory and motor activities and constitutes a nodal nucleus on the song system.

It is found in the cytoplasm. It catalyses the reaction retinal + NAD(+) + H2O = retinoate + NADH + 2 H(+). The enzyme catalyses all-trans-retinal + NAD(+) + H2O = all-trans-retinoate + NADH + 2 H(+). The catalysed reaction is all-trans-13,14-dihydroretinal + NAD(+) + H2O = all-trans-13,14-dihydroretinoate + NADH + 2 H(+). The protein operates within cofactor metabolism; retinol metabolism. Catalyzes the NAD-dependent oxidation of aldehyde substrates, such as all-trans-retinal and all-trans-13,14-dihydroretinal, to their corresponding carboxylic acids, all-trans-retinoate and all-trans-13,14-dihydroretinoate, respectively. Retinoate signaling is critical for the transcriptional control of many genes, for instance it is crucial for initiation of meiosis in both male and female. Recognizes retinal as substrate, both in its free form and when bound to cellular retinol-binding protein. Lacks activity with benzaldehyde, acetaldehyde and octanal. Displays complete lack of activity with citral. Plays a significant role in the acquisition and production of learned songs. The polypeptide is Retinal dehydrogenase 2 (ALDH1A2) (Taeniopygia guttata (Zebra finch)).